A 42-amino-acid polypeptide reads, in one-letter code: Bacteriocin bavaricin-MN (42 aa).

Cysteine 10 and cysteine 15 are joined by a disulfide.

It belongs to the bacteriocin class IIA/YGNGV family.

The protein resides in the secreted. Its function is as follows. Has antimicrobial activity. The chain is Bacteriocin bavaricin-MN from Latilactobacillus sakei (Lactobacillus sakei).